Here is a 1299-residue protein sequence, read N- to C-terminus: Outer capsid protein VP1 (1299 aa).

This sequence belongs to the aquareoviridae outer capsid VP1 protein family.

The protein localises to the virion. It carries out the reaction a 5'-end diphospho-ribonucleoside in mRNA + GTP + H(+) = a 5'-end (5'-triphosphoguanosine)-ribonucleoside in mRNA + diphosphate. The enzyme catalyses a 5'-end (5'-triphosphoguanosine)-ribonucleoside in mRNA + S-adenosyl-L-methionine = a 5'-end (N(7)-methyl 5'-triphosphoguanosine)-ribonucleoside in mRNA + S-adenosyl-L-homocysteine. Outer capsid protein involved in mRNA capping. Catalyzes the last 3 enzymatic activities for formation of the 5' cap structure on the viral plus-strand transcripts, namely the RNA guanylyltransferase, RNA-7N- and RNA-2'O-methyltransferase activities. This chain is Outer capsid protein VP1 (S1), found in Aquareovirus C (isolate Golden shiner/USA/GSRV/1977) (AQRV-C).